An 840-amino-acid chain; its full sequence is Heat shock 70 kDa protein 4 (840 aa).

At lysine 53 the chain carries N6-acetyllysine. The residue at position 76 (serine 76) is a Phosphoserine. A phosphotyrosine mark is found at tyrosine 89 and tyrosine 336. Phosphoserine is present on residues serine 393 and serine 415. Lysine 430 is subject to N6-acetyllysine. Positions 500–575 are disordered; that stretch reads VHKSEESEEP…QAKKAKVKTS (76 aa). Residues 514-533 show a composition bias toward basic and acidic residues; the sequence is QNAKEEEKMQVDQEEPHTEE. Threonine 538 is modified (phosphothreonine). At serine 546 the chain carries Phosphoserine. Tyrosine 660 is modified (phosphotyrosine). Serine 756 is modified (phosphoserine). At lysine 773 the chain carries N6-methyllysine. The segment at 781-840 is disordered; it reads PIISKPKPKVEPPKEEPKHAEQNGPVDGQGDNPGTQAAEHGADTAVPSDGDKKLPEMDID. 2 stretches are compositionally biased toward basic and acidic residues: residues 788 to 801 and 829 to 840; these read PKVEPPKEEPKHAE and DGDKKLPEMDID.

This sequence belongs to the heat shock protein 70 family. In terms of assembly, interacts with TJP1/ZO-1. In terms of tissue distribution, ubiquitous. Highly expressed in testis.

Its subcellular location is the cytoplasm. This is Heat shock 70 kDa protein 4 (Hspa4) from Rattus norvegicus (Rat).